A 425-amino-acid polypeptide reads, in one-letter code: Serine--tRNA ligase (425 aa).

231–233 (TAE) is an L-serine binding site. An ATP-binding site is contributed by 262 to 264 (RRE). Residue glutamate 285 coordinates L-serine. ATP is bound at residue 349-352 (EISS). An L-serine-binding site is contributed by serine 385.

The protein belongs to the class-II aminoacyl-tRNA synthetase family. Type-1 seryl-tRNA synthetase subfamily. As to quaternary structure, homodimer. The tRNA molecule binds across the dimer.

It is found in the cytoplasm. It carries out the reaction tRNA(Ser) + L-serine + ATP = L-seryl-tRNA(Ser) + AMP + diphosphate + H(+). The enzyme catalyses tRNA(Sec) + L-serine + ATP = L-seryl-tRNA(Sec) + AMP + diphosphate + H(+). Its pathway is aminoacyl-tRNA biosynthesis; selenocysteinyl-tRNA(Sec) biosynthesis; L-seryl-tRNA(Sec) from L-serine and tRNA(Sec): step 1/1. Functionally, catalyzes the attachment of serine to tRNA(Ser). Is also able to aminoacylate tRNA(Sec) with serine, to form the misacylated tRNA L-seryl-tRNA(Sec), which will be further converted into selenocysteinyl-tRNA(Sec). The polypeptide is Serine--tRNA ligase (Aquifex aeolicus (strain VF5)).